Reading from the N-terminus, the 256-residue chain is Imidazole glycerol phosphate synthase subunit HisF (256 aa).

Catalysis depends on residues Asp12 and Asp131.

Belongs to the HisA/HisF family. In terms of assembly, heterodimer of HisH and HisF.

The protein localises to the cytoplasm. It catalyses the reaction 5-[(5-phospho-1-deoxy-D-ribulos-1-ylimino)methylamino]-1-(5-phospho-beta-D-ribosyl)imidazole-4-carboxamide + L-glutamine = D-erythro-1-(imidazol-4-yl)glycerol 3-phosphate + 5-amino-1-(5-phospho-beta-D-ribosyl)imidazole-4-carboxamide + L-glutamate + H(+). It functions in the pathway amino-acid biosynthesis; L-histidine biosynthesis; L-histidine from 5-phospho-alpha-D-ribose 1-diphosphate: step 5/9. IGPS catalyzes the conversion of PRFAR and glutamine to IGP, AICAR and glutamate. The HisF subunit catalyzes the cyclization activity that produces IGP and AICAR from PRFAR using the ammonia provided by the HisH subunit. This is Imidazole glycerol phosphate synthase subunit HisF from Pseudomonas putida (strain ATCC 700007 / DSM 6899 / JCM 31910 / BCRC 17059 / LMG 24140 / F1).